The primary structure comprises 334 residues: Serine/Arginine-related protein 53 (334 aa).

Over residues 1 to 13 (MGRRSSDTEEESR) the composition is skewed to basic and acidic residues. Disordered regions lie at residues 1-173 (MGRR…IKAG), 201-222 (LKAK…QATL), and 241-290 (VQQT…SIPT). Residues 14–24 (SKRKKKHRRRS) are compositionally biased toward basic residues. Positions 44 to 62 (PRSESRSWSRDRQPRSHSY) are enriched in basic and acidic residues. The segment covering 78-118 (SRRKRSRSRSRGRGKSYRVQRSRSKSRTRRSRSRPRPRSHS) has biased composition (basic residues). Composition is skewed to basic and acidic residues over residues 132-166 (RSRD…KRGD), 201-218 (LKAK…KEED), and 247-262 (SSKD…EVKH). A coiled-coil region spans residues 180–234 (AEQAKARLQLVLEAAAKADEALKAKERNEEEAKRRKEEDQATLGEQVKRVKEIEA).

In terms of assembly, interacts (via Arg/Ser-rich domain) with LUC7L3, RBM39 and RSF1. In terms of processing, phosphorylated.

It localises to the nucleus speckle. The protein resides in the nucleus. Its subcellular location is the cytoplasm. In terms of biological role, plays a role in pre-mRNA splicing. Involved in both constitutive and alternative pre-mRNA splicing. May have a role in the recognition of the 3' splice site during the second step of splicing. The polypeptide is Serine/Arginine-related protein 53 (Rsrc1) (Rattus norvegicus (Rat)).